The primary structure comprises 416 residues: Glutamyl-tRNA reductase (416 aa).

Substrate is bound by residues 49-52, serine 105, 110-112, and glutamine 116; these read TCNR and EPQ. The Nucleophile role is filled by cysteine 50. 185 to 190 provides a ligand contact to NADP(+); it reads GAGETI.

This sequence belongs to the glutamyl-tRNA reductase family. Homodimer.

It carries out the reaction (S)-4-amino-5-oxopentanoate + tRNA(Glu) + NADP(+) = L-glutamyl-tRNA(Glu) + NADPH + H(+). Its pathway is porphyrin-containing compound metabolism; protoporphyrin-IX biosynthesis; 5-aminolevulinate from L-glutamyl-tRNA(Glu): step 1/2. Its function is as follows. Catalyzes the NADPH-dependent reduction of glutamyl-tRNA(Glu) to glutamate 1-semialdehyde (GSA). The protein is Glutamyl-tRNA reductase of Shewanella pealeana (strain ATCC 700345 / ANG-SQ1).